Reading from the N-terminus, the 466-residue chain is Cysteine--tRNA ligase (466 aa).

Cys28 contributes to the Zn(2+) binding site. The short motif at 30 to 40 (PTVYNFFHIGN) is the 'HIGH' region element. 3 residues coordinate Zn(2+): Cys208, His233, and Glu237. A 'KMSKS' region motif is present at residues 265–269 (KMSKS). Lys268 contributes to the ATP binding site.

This sequence belongs to the class-I aminoacyl-tRNA synthetase family. In terms of assembly, monomer. It depends on Zn(2+) as a cofactor.

The protein localises to the cytoplasm. The catalysed reaction is tRNA(Cys) + L-cysteine + ATP = L-cysteinyl-tRNA(Cys) + AMP + diphosphate. This Clostridium perfringens (strain SM101 / Type A) protein is Cysteine--tRNA ligase.